Reading from the N-terminus, the 449-residue chain is Hyaluronidase-4 (449 aa).

The N-terminal stretch at M1 to V23 is a signal peptide. Disulfide bonds link C47–C340 and C211–C227. N67, N103, and N111 each carry an N-linked (GlcNAc...) asparagine glycan. Catalysis depends on E135, which acts as the Proton donor. N153 carries an N-linked (GlcNAc...) asparagine glycan. N-linked (GlcNAc...) asparagine glycosylation occurs at N357. 3 cysteine pairs are disulfide-bonded: C365/C376, C370/C427, and C429/C438. An N-linked (GlcNAc...) asparagine glycan is attached at N401. The region spanning C427–C438 is the EGF-like domain.

This sequence belongs to the glycosyl hydrolase 56 family. Monomer. Expressed by the venom gland.

Its subcellular location is the secreted. The catalysed reaction is Random hydrolysis of (1-&gt;4)-linkages between N-acetyl-beta-D-glucosamine and D-glucuronate residues in hyaluronate.. Functionally, snake venom endo-hyaluronidase that degrades hyaluronan to smaller oligosaccharide fragments. In venom, it is not toxic by itself, but increases the diffusion of other venom proteins by degrading the extracellular matrix. In addition, it displays antiedematogenic activity. This Cerastes cerastes (Horned desert viper) protein is Hyaluronidase-4.